The chain runs to 249 residues: BPI fold-containing family A member 2 (249 aa).

An N-terminal signal peptide occupies residues 1–18 (MLQLWKLVLLCGVLTGTS). Residues N124 and N132 are each glycosylated (N-linked (GlcNAc...) asparagine). Residues C174 and C217 are joined by a disulfide bond.

The protein belongs to the BPI/LBP/Plunc superfamily. Plunc family. In terms of tissue distribution, detected in submandibular gland. Secreted into saliva.

Its subcellular location is the secreted. Its function is as follows. Has strong antibacterial activity against P.aeruginosa. This chain is BPI fold-containing family A member 2 (BPIFA2), found in Homo sapiens (Human).